The following is a 138-amino-acid chain: ATP synthase epsilon chain (138 aa).

The protein belongs to the ATPase epsilon chain family. As to quaternary structure, F-type ATPases have 2 components, CF(1) - the catalytic core - and CF(0) - the membrane proton channel. CF(1) has five subunits: alpha(3), beta(3), gamma(1), delta(1), epsilon(1). CF(0) has three main subunits: a, b and c.

It localises to the cell inner membrane. Produces ATP from ADP in the presence of a proton gradient across the membrane. This is ATP synthase epsilon chain from Endomicrobium trichonymphae.